A 591-amino-acid chain; its full sequence is Transcription factor COE1-A (591 aa).

The segment at 63–66 is interaction with DNA; that stretch reads RKSN. The C5-type zinc finger occupies 151 to 170; sequence CRVLLTHEIMCSRCCDKKSC. 2 interaction with DNA regions span residues 197–204 and 236–239; these read NCLKNAGN and NNSK. The 83-residue stretch at 262–344 folds into the IPT/TIG domain; the sequence is PCIKAISPSE…CKGTPGRFIY (83 aa). Residues 454-466 are compositionally biased toward polar residues; sequence ANQGFSRNTSSVS. Residues 454-484 form a disordered region; the sequence is ANQGFSRNTSSVSPHGYVPSTTPQQSSYSTV. Positions 471-484 are enriched in low complexity; sequence VPSTTPQQSSYSTV.

This sequence belongs to the COE family. As to quaternary structure, forms either a homodimer or a heterodimer with a related family member. Detected in B cells.

The protein localises to the nucleus. Functionally, transcriptional activator. The protein is Transcription factor COE1-A of Danio rerio (Zebrafish).